The following is a 1165-amino-acid chain: Pesticidal crystal protein Cry1Da (1165 aa).

Belongs to the delta endotoxin family.

In terms of biological role, promotes colloidosmotic lysis by binding to the midgut epithelial cells of many lepidopteran larvae. This Bacillus thuringiensis subsp. aizawai protein is Pesticidal crystal protein Cry1Da (cry1Da).